The primary structure comprises 272 residues: HMP-PP phosphatase (272 aa).

Asp-8 acts as the Nucleophile in catalysis. Asp-8, Asp-10, and Asp-212 together coordinate Mg(2+).

Belongs to the HAD-like hydrolase superfamily. Cof family. The cofactor is Mg(2+).

It carries out the reaction 4-amino-2-methyl-5-(diphosphooxymethyl)pyrimidine + H2O = 4-amino-2-methyl-5-(phosphooxymethyl)pyrimidine + phosphate + H(+). In terms of biological role, catalyzes the hydrolysis of 4-amino-2-methyl-5-hydroxymethylpyrimidine pyrophosphate (HMP-PP) to 4-amino-2-methyl-5-hydroxymethylpyrimidine phosphate (HMP-P). The polypeptide is HMP-PP phosphatase (Escherichia fergusonii (strain ATCC 35469 / DSM 13698 / CCUG 18766 / IAM 14443 / JCM 21226 / LMG 7866 / NBRC 102419 / NCTC 12128 / CDC 0568-73)).